Here is a 215-residue protein sequence, read N- to C-terminus: Transmembrane protein 267 (215 aa).

Helical transmembrane passes span 77 to 97 (FGEI…HFLL), 114 to 134 (FLHC…TMHF), and 178 to 198 (FWLY…VMYF).

The protein resides in the membrane. In Bos taurus (Bovine), this protein is Transmembrane protein 267 (TMEM267).